A 274-amino-acid polypeptide reads, in one-letter code: Proteasome subunit beta (274 aa).

The propeptide at 1-52 is removed in mature form; by autocatalysis; that stretch reads MADPLGAAGRLPAVFMTPGTSSFADFLSRSAPHLLPGARSGLPGPVTEVAHG. Catalysis depends on T53, which acts as the Nucleophile.

It belongs to the peptidase T1B family. In terms of assembly, the 20S proteasome core is composed of 14 alpha and 14 beta subunits that assemble into four stacked heptameric rings, resulting in a barrel-shaped structure. The two inner rings, each composed of seven catalytic beta subunits, are sandwiched by two outer rings, each composed of seven alpha subunits. The catalytic chamber with the active sites is on the inside of the barrel. Has a gated structure, the ends of the cylinder being occluded by the N-termini of the alpha-subunits. Is capped by the proteasome-associated ATPase, ARC.

The protein localises to the cytoplasm. The enzyme catalyses Cleavage of peptide bonds with very broad specificity.. It participates in protein degradation; proteasomal Pup-dependent pathway. With respect to regulation, the formation of the proteasomal ATPase ARC-20S proteasome complex, likely via the docking of the C-termini of ARC into the intersubunit pockets in the alpha-rings, may trigger opening of the gate for substrate entry. Interconversion between the open-gate and close-gate conformations leads to a dynamic regulation of the 20S proteasome proteolysis activity. Its function is as follows. Component of the proteasome core, a large protease complex with broad specificity involved in protein degradation. In Frankia casuarinae (strain DSM 45818 / CECT 9043 / HFP020203 / CcI3), this protein is Proteasome subunit beta.